The chain runs to 449 residues: Putative recombination initiation defects 3 (449 aa).

A disordered region spans residues 21 to 56 (LRRSAEPQASQQLRSQQSQQSFSQGPSSSQRGCGGF). Over residues 28–50 (QASQQLRSQQSQQSFSQGPSSSQ) the composition is skewed to low complexity. A Nuclear localization signal motif is present at residues 437-441 (RTKRK).

As to quaternary structure, interacts with PRD1; this interaction facilitates a binding to DFO.

The protein localises to the nucleus. Functionally, involved in DNA cleavage that forms the double-strand breaks (DSB) that initiate meiotic recombination. The sequence is that of Putative recombination initiation defects 3 from Arabidopsis thaliana (Mouse-ear cress).